A 103-amino-acid chain; its full sequence is Large ribosomal subunit protein uL24 (103 aa).

The protein belongs to the universal ribosomal protein uL24 family. As to quaternary structure, part of the 50S ribosomal subunit.

Functionally, one of two assembly initiator proteins, it binds directly to the 5'-end of the 23S rRNA, where it nucleates assembly of the 50S subunit. One of the proteins that surrounds the polypeptide exit tunnel on the outside of the subunit. This chain is Large ribosomal subunit protein uL24 (rplX), found in Bacillus spizizenii (strain ATCC 23059 / NRRL B-14472 / W23) (Bacillus subtilis subsp. spizizenii).